The primary structure comprises 162 residues: Peptide methionine sulfoxide reductase MsrA (162 aa).

Cysteine 16 is a catalytic residue.

Belongs to the MsrA Met sulfoxide reductase family.

It catalyses the reaction L-methionyl-[protein] + [thioredoxin]-disulfide + H2O = L-methionyl-(S)-S-oxide-[protein] + [thioredoxin]-dithiol. The catalysed reaction is [thioredoxin]-disulfide + L-methionine + H2O = L-methionine (S)-S-oxide + [thioredoxin]-dithiol. Its function is as follows. Has an important function as a repair enzyme for proteins that have been inactivated by oxidation. Catalyzes the reversible oxidation-reduction of methionine sulfoxide in proteins to methionine. The chain is Peptide methionine sulfoxide reductase MsrA from Geobacter metallireducens (strain ATCC 53774 / DSM 7210 / GS-15).